The following is a 398-amino-acid chain: 1-deoxy-D-xylulose 5-phosphate reductoisomerase (398 aa).

Positions 14, 15, 16, 17, 42, and 128 each coordinate NADPH. K129 contacts 1-deoxy-D-xylulose 5-phosphate. Residue E130 participates in NADPH binding. Mn(2+) is bound at residue D154. The 1-deoxy-D-xylulose 5-phosphate site is built by S155, E156, S185, and H208. Position 156 (E156) interacts with Mn(2+). G214 provides a ligand contact to NADPH. The 1-deoxy-D-xylulose 5-phosphate site is built by S221, N226, K227, and E230. Residue E230 coordinates Mn(2+).

The protein belongs to the DXR family. The cofactor is Mg(2+). Requires Mn(2+) as cofactor.

It catalyses the reaction 2-C-methyl-D-erythritol 4-phosphate + NADP(+) = 1-deoxy-D-xylulose 5-phosphate + NADPH + H(+). Its pathway is isoprenoid biosynthesis; isopentenyl diphosphate biosynthesis via DXP pathway; isopentenyl diphosphate from 1-deoxy-D-xylulose 5-phosphate: step 1/6. In terms of biological role, catalyzes the NADPH-dependent rearrangement and reduction of 1-deoxy-D-xylulose-5-phosphate (DXP) to 2-C-methyl-D-erythritol 4-phosphate (MEP). The sequence is that of 1-deoxy-D-xylulose 5-phosphate reductoisomerase from Dechloromonas aromatica (strain RCB).